Consider the following 1141-residue polypeptide: Putative late blight resistance protein homolog R1B-13 (1141 aa).

A coiled-coil region spans residues 417 to 437 (DSLAFLKNQIQVIQMEFEILQ). An NB-ARC domain is found at 516–742 (TVITHTSSQL…LSIVLVADVL (227 aa)). LRR repeat units lie at residues 826 to 851 (FKFL…PYLR), 869 to 894 (LWNL…VWDM), 992 to 1016 (APNL…TVDH), 1017 to 1041 (LKHL…VSNG), and 1043 to 1068 (FPQL…AFPI).

It belongs to the disease resistance NB-LRR family.

It localises to the cytoplasm. Its subcellular location is the membrane. In terms of biological role, confers resistance to late blight (Phytophthora infestans) races carrying the avirulence gene Avr1. Resistance proteins guard the plant against pathogens that contain an appropriate avirulence protein via an indirect interaction with this avirulence protein. That triggers a defense system including the hypersensitive response, which restricts the pathogen growth. The chain is Putative late blight resistance protein homolog R1B-13 (R1B-13) from Solanum demissum (Wild potato).